A 388-amino-acid chain; its full sequence is Spermosin (388 aa).

A signal peptide spans 1–22 (MAAINVIFISGAIALFALTGSC). Over residues 29 to 49 (FTNKPYATQNPYSPPQTNQPT) the composition is skewed to polar residues. The interval 29–98 (FTNKPYATQN…SENSESENSE (70 aa)) is disordered. Pro residues predominate over residues 54 to 64 (QPGPAPTPAPY). Intrachain disulfides connect cysteine 116/cysteine 251, cysteine 163/cysteine 179, cysteine 265/cysteine 330, cysteine 295/cysteine 310, and cysteine 320/cysteine 349. The region spanning 130-372 (IVGGAEAVPN…NLEWLCCYMP (243 aa)) is the Peptidase S1 domain. Residues histidine 178 and aspartate 231 each act as charge relay system in the active site. Serine 324 acts as the Charge relay system in catalysis.

The protein belongs to the peptidase S1 family. In terms of assembly, heterodimer of a heavy chain and either an L1 light chain or an L2 light chain linked by a disulfide bond. In terms of tissue distribution, detected in sperm, but not in unfertilized eggs (at protein level). Expressed in gonad, but not in hepatopancreas, intestine or branchial basket.

It is found in the secreted. The catalysed reaction is Hydrolyzes arginyl bonds, preferably with Pro in the P2 position.. With respect to regulation, inhibited by peptidyl-argininals with Pro in the P2 position, diisopropyl fluorophosphate, phenylmethanesulfonyl fluoride, leupeptin, antipain, soybean trypsin inhibitor, aprotinin, ovomucoid, valyl-prolyl-arginyl-chloromethane, glycyl-valyl-arginyl-chloromethane, p-aminobenzamidine, benzamidine, zinc chloride and mercuric chloride. In terms of biological role, trypsin-like protease with a narrow substrate specificity. Preferentially hydrolyzes substrates with Pro in the P2 position and Val in the P3 position. Plays a role in fertilization. The polypeptide is Spermosin (Halocynthia roretzi (Sea squirt)).